A 562-amino-acid chain; its full sequence is O-fucosyltransferase 4 (562 aa).

Residues 10-46 (SIQNRLPGSDHTTPSPPTSPHLCRSRSKSSSVSGQQQ) are disordered. Positions 37 to 46 (KSSSVSGQQQ) are enriched in low complexity. A helical; Signal-anchor for type II membrane protein transmembrane segment spans residues 67–87 (GILLFAPIIYISCMLFHLHAA). 4 N-linked (GlcNAc...) asparagine glycosylation sites follow: asparagine 122, asparagine 146, asparagine 185, and asparagine 239. 332 to 334 (HLR) is a substrate binding site. 4 N-linked (GlcNAc...) asparagine glycosylation sites follow: asparagine 404, asparagine 420, asparagine 450, and asparagine 555.

The protein belongs to the glycosyltransferase GT106 family.

It is found in the membrane. The protein operates within glycan metabolism. The sequence is that of O-fucosyltransferase 4 from Arabidopsis thaliana (Mouse-ear cress).